The primary structure comprises 346 residues: MQTEGKKNILVTGGAGFIGSAVVRHIIQNTRDSVVNLDKLTYAGNLESLTDIADNPRYAFEQVDICDRAELDRVFAQYRPDAVMHLAAESHVDRAIGSAGEFIRTNIVGTFDLLEAARAYWQQMPSEKREAFRFHHISTDEVYGDLHGTDDLFTETTPYAPSSPYSASKAAADHLVRAWQRTYRLPSIVSNCSNNYGPRQFPEKLIPLMILNALSGKPLPVYGDGAQIRDWLFVEDHARALYQVVTEGVVGETYNIGGHNEKTNLEVVKTICALLEELAPEKPAGVARYEDLITFVQDRPGHDARYAVDAAKIRRDLGWLPLETFESGLRKTVQWYLDNKTRRQNA.

NAD(+)-binding positions include 17–18 (FI), 38–41 (DKLT), 64–65 (DI), 86–90 (LAAES), and Thr105. Residue Ser90 participates in substrate binding. Residue Thr139 coordinates substrate. Catalysis depends on Asp140, which acts as the Proton donor. Residues Glu141 and Tyr165 each act as proton acceptor in the active site. 165 to 169 (YSASK) contributes to the NAD(+) binding site. Asn194 contacts substrate. Residue Asn195 participates in NAD(+) binding. Residues 204–205 (KL), 220–222 (PVY), Arg229, Asn264, and 298–302 (DRPGH) each bind substrate.

Belongs to the NAD(P)-dependent epimerase/dehydratase family. dTDP-glucose dehydratase subfamily. In terms of assembly, homodimer. The cofactor is NAD(+).

The enzyme catalyses dTDP-alpha-D-glucose = dTDP-4-dehydro-6-deoxy-alpha-D-glucose + H2O. Its pathway is carbohydrate biosynthesis; dTDP-L-rhamnose biosynthesis. It functions in the pathway bacterial outer membrane biogenesis; LPS O-antigen biosynthesis. Catalyzes the dehydration of dTDP-D-glucose to form dTDP-6-deoxy-D-xylo-4-hexulose via a three-step process involving oxidation, dehydration and reduction. This is dTDP-glucose 4,6-dehydratase from Neisseria gonorrhoeae.